We begin with the raw amino-acid sequence, 235 residues long: Probable flavin-dependent thymidylate synthase (235 aa).

In terms of domain architecture, ThyX spans 1–229 (MKVQLIASTI…PNTYQDIPTE (229 aa)). Residues serine 70 and 93–95 (RHR) contribute to the FAD site. Residues 90–93 (ELER), 103–105 (SQR), and arginine 168 each bind dUMP. The ThyX motif signature appears at 93 to 103 (RHRHLSFSVVS). Residue 184-186 (NHR) participates in FAD binding. Arginine 195 is a dUMP binding site. Catalysis depends on arginine 195, which acts as the Involved in ionization of N3 of dUMP, leading to its activation.

This sequence belongs to the thymidylate synthase ThyX family. As to quaternary structure, homotetramer. It depends on FAD as a cofactor.

It carries out the reaction dUMP + (6R)-5,10-methylene-5,6,7,8-tetrahydrofolate + NADPH + H(+) = dTMP + (6S)-5,6,7,8-tetrahydrofolate + NADP(+). The protein operates within pyrimidine metabolism; dTTP biosynthesis. Functionally, catalyzes the reductive methylation of 2'-deoxyuridine-5'-monophosphate (dUMP) to 2'-deoxythymidine-5'-monophosphate (dTMP) while utilizing 5,10-methylenetetrahydrofolate (mTHF) as the methyl donor, and NADPH and FADH(2) as the reductant. The sequence is that of Probable flavin-dependent thymidylate synthase (48) from Mycobacterium (Mycobacteriophage D29).